The following is a 476-amino-acid chain: Glycogen synthase (476 aa).

ADP-alpha-D-glucose is bound at residue K15.

Belongs to the glycosyltransferase 1 family. Bacterial/plant glycogen synthase subfamily.

The catalysed reaction is [(1-&gt;4)-alpha-D-glucosyl](n) + ADP-alpha-D-glucose = [(1-&gt;4)-alpha-D-glucosyl](n+1) + ADP + H(+). It functions in the pathway glycan biosynthesis; glycogen biosynthesis. In terms of biological role, synthesizes alpha-1,4-glucan chains using ADP-glucose. The protein is Glycogen synthase of Streptococcus agalactiae serotype III (strain NEM316).